We begin with the raw amino-acid sequence, 436 residues long: Magnesium transporter MRS2-4 (436 aa).

Residues 1–56 (MGKGPLSFRRLSSIRHRKKGSAVKDDSAQTSTPSSPPPPLPIHAGGSAVGATGKAK) are disordered. Residues 12-21 (SSIRHRKKGS) show a composition bias toward basic residues. The span at 44–53 (AGGSAVGATG) shows a compositional bias: low complexity. 2 consecutive transmembrane segments (helical) span residues 372-392 (LTLTIASFAIAAETLLASLFG) and 405-425 (VFGYFVWSVTALCIVLFMVTL). Residues 392-394 (GMN) carry the Required for magnesium transport activity motif.

This sequence belongs to the CorA metal ion transporter (MIT) (TC 1.A.35.5) family. Expressed in the whole plant except roots.

Its subcellular location is the membrane. In terms of biological role, magnesium transporter that may mediate the influx of magnesium. This Arabidopsis thaliana (Mouse-ear cress) protein is Magnesium transporter MRS2-4 (MRS2-4).